We begin with the raw amino-acid sequence, 483 residues long: ATP synthase subunit beta (483 aa).

167–174 (GGAGVGKT) is a binding site for ATP.

Belongs to the ATPase alpha/beta chains family. As to quaternary structure, F-type ATPases have 2 components, CF(1) - the catalytic core - and CF(0) - the membrane proton channel. CF(1) has five subunits: alpha(3), beta(3), gamma(1), delta(1), epsilon(1). CF(0) has three main subunits: a(1), b(2) and c(9-12). The alpha and beta chains form an alternating ring which encloses part of the gamma chain. CF(1) is attached to CF(0) by a central stalk formed by the gamma and epsilon chains, while a peripheral stalk is formed by the delta and b chains.

The protein localises to the cell membrane. It carries out the reaction ATP + H2O + 4 H(+)(in) = ADP + phosphate + 5 H(+)(out). Its function is as follows. Produces ATP from ADP in the presence of a proton gradient across the membrane. The catalytic sites are hosted primarily by the beta subunits. The polypeptide is ATP synthase subunit beta (Paenarthrobacter aurescens (strain TC1)).